The sequence spans 177 residues: Parathyroid hormone-related protein (177 aa).

The first 24 residues, 1–24 (MLRRLVQQWSVAVFLLSYSVPSCG), serve as a signal peptide directing secretion. Residues 25-34 (RSVEGPGRRL) constitute a propeptide that is removed on maturation. Residues 57–68 (RFFLHHLIAEIH) are important for receptor binding. Residues 74–177 (ATSEVSPNSK…PEPELDSRRH (104 aa)) form a disordered region. Residues 76 to 90 (SEVSPNSKPAANTKN) are compositionally biased toward polar residues. The Nuclear localization signal signature appears at 108 to 129 (TNKVEPYKEQPLKTPGKKKKGK). Residues 109-118 (NKVEPYKEQP) are compositionally biased toward basic and acidic residues. Residues 122–132 (PGKKKKGKPGK) are compositionally biased toward basic residues.

The protein belongs to the parathyroid hormone family. PTHrP interacts with PTH1R (via N-terminal extracellular domain). In terms of processing, there are several secretory forms, including osteostatin, arising from endoproteolytic cleavage of the initial translation product. Each of these secretory forms is believed to have one or more of its own receptors that mediates the normal paracrine, autocrine and endocrine actions.

It localises to the secreted. The protein localises to the cytoplasm. The protein resides in the nucleus. In terms of biological role, neuroendocrine peptide which is a critical regulator of cellular and organ growth, development, migration, differentiation and survival and of epithelial calcium ion transport. Acts by binding to its receptor, PTH1R, activating G protein-coupled receptor signaling. Regulates endochondral bone development and epithelial-mesenchymal interactions during the formation of the mammary glands and teeth. Required for skeletal homeostasis. Promotes mammary mesenchyme differentiation and bud outgrowth by modulating mesenchymal cell responsiveness to BMPs. Up-regulates BMPR1A expression in the mammary mesenchyme and this increases the sensitivity of these cells to BMPs and allows them to respond to BMP4 in a paracrine and/or autocrine fashion. BMP4 signaling in the mesenchyme, in turn, triggers epithelial outgrowth and augments MSX2 expression, which causes the mammary mesenchyme to inhibit hair follicle formation within the nipple sheath. Its function is as follows. Potent inhibitor of osteoclastic bone resorption. This chain is Parathyroid hormone-related protein (PTHLH), found in Oryctolagus cuniculus (Rabbit).